Here is a 1444-residue protein sequence, read N- to C-terminus: RNA-directed RNA polymerase P1 (1444 aa).

The disordered stretch occupies residues 156 to 182 (SEEIQMDESQSDKRRRKKRMEKSRPVW). Residues 690–897 (LGVGFATLYQ…KTVISHISGE (208 aa)) form the RdRp catalytic domain.

It belongs to the reoviridae RNA-directed RNA polymerase family.

It is found in the virion. The protein localises to the host cytoplasm. It catalyses the reaction RNA(n) + a ribonucleoside 5'-triphosphate = RNA(n+1) + diphosphate. Its function is as follows. RNA-directed RNA polymerase that is involved in both transcription and genome replication. Together with the capping enzyme P5 and protein P7, forms an enzyme complex positioned near the channels situated at each of the five-fold vertices of the core. This is RNA-directed RNA polymerase P1 (S1) from Rice dwarf virus (isolate Fujian) (RDV).